The following is a 258-amino-acid chain: ER membrane protein complex subunit 3 (258 aa).

3 helical membrane-spanning segments follow: residues 8 to 28 (PALR…IGIL), 123 to 143 (VVPQ…FILL), and 173 to 193 (SISW…LLLG).

The protein belongs to the EMC3 family.

It is found in the cytoplasm. Its subcellular location is the membrane. This chain is ER membrane protein complex subunit 3, found in Schizosaccharomyces pombe (strain 972 / ATCC 24843) (Fission yeast).